The following is a 337-amino-acid chain: 15-cis-phytoene synthase (337 aa).

The protein belongs to the phytoene/squalene synthase family. The cofactor is ATP. Requires Mn(2+) as cofactor. Mg(2+) is required as a cofactor.

The enzyme catalyses 2 (2E,6E,10E)-geranylgeranyl diphosphate = 15-cis-phytoene + 2 diphosphate. Its pathway is carotenoid biosynthesis; phytoene biosynthesis. In terms of biological role, involved in the biosynthesis of carotenoids. Catalyzes the condensation of two molecules of geranylgeranyl diphosphate (GGPP) to give prephytoene diphosphate (PPPP) and the subsequent rearrangement of the cyclopropylcarbinyl intermediate to yield 15-cis-phytoene. The sequence is that of 15-cis-phytoene synthase (crtB) from Synechocystis sp. (strain ATCC 27184 / PCC 6803 / Kazusa).